The following is a 255-amino-acid chain: uncharacterized protein (255 aa).

Belongs to the methyltransferase superfamily.

This is an uncharacterized protein from Mycobacterium marinum (strain ATCC BAA-535 / M).